The chain runs to 224 residues: Cytidylate kinase (224 aa).

14–22 (GPAGSGKST) lines the ATP pocket.

The protein belongs to the cytidylate kinase family. Type 1 subfamily.

Its subcellular location is the cytoplasm. It catalyses the reaction CMP + ATP = CDP + ADP. The catalysed reaction is dCMP + ATP = dCDP + ADP. The protein is Cytidylate kinase of Mycoplasmoides gallisepticum (strain R(low / passage 15 / clone 2)) (Mycoplasma gallisepticum).